Reading from the N-terminus, the 324-residue chain is Probable metal transport system membrane protein CPn_0346/CP_0414/CPj0346/CpB0353 (324 aa).

Helical transmembrane passes span 1–21 (MALG…SVFF), 39–59 (IQII…TFLV), 64–84 (AMYA…VCLF), 94–114 (GTLT…IYFI), 125–145 (STAL…VFMT), 165–185 (EDIF…IFAF), 201–221 (LGIP…ACLV), 226–246 (AVGV…AKVI), 252–272 (SLMA…PASS), and 286–306 (SGIS…ISYF).

This sequence belongs to the ABC-3 integral membrane protein family.

It is found in the cell inner membrane. In terms of biological role, part of an ATP-driven transport system CPn_0346/CPn_0347/CPn_0348/CPn_0349 for a metal. The chain is Probable metal transport system membrane protein CPn_0346/CP_0414/CPj0346/CpB0353 from Chlamydia pneumoniae (Chlamydophila pneumoniae).